A 622-amino-acid polypeptide reads, in one-letter code: MNKLTFHNNKAMQDRRRVCIFLPNDKSVSIIINVKILCHQLLVQVCDLLRLKDSHLFGLSVIQNNEHVYMELSQKLYKYCPKEWKKEASKVRQYEVTWGIDQFGPPMIIHFRVQYYVENGKLISDRIARYYYYWHLRKQVLHSQCVLREEAYFLLAAFALQADLGNFKRKLHHGDYFEPEAYFPAWVVSKRGKDYILKHIPNMHKDQFALTASEAYLKYIKEAVRLDDVAIHYYRLYKDKREAEGSLTLGLTMRGIQIFQNLEEEKQLLYDFPWTNVGKLVFVGKKFEILPDGLPSARKLVYYTGCPTRSRHLLQLLSNSHRLYMNLQPVLRHLRKQEENEEKKQYRESYISDNLDLDMDPLEKRSRASGSSAGSVKHKRLSRHSTASHSSSHTSGIEADTKPRDPGPEDSCSGSAMHRKLKTCSSMTSHGSSHTSGVESGGKDRLEEDSQDEEIEMLVDDPRDLEPMPEESLEVSPEMCIYITEDMLLSRKLNGHSGLIVKEIGSSTSSSSETVVRLRGQSTDSLPQTICRKPKTSTDRHSLSLDDIRLYQKDFLRIAGLCQDTAQSYTFGCGHELDESGLYCNSCLAQQCVNIQDAFPVKRASKYFSLDLTHDEVPEFVV.

The FERM domain maps to 16-328 (RRVCIFLPND…NSHRLYMNLQ (313 aa)). Positions 357–452 (LDMDPLEKRS…KDRLEEDSQD (96 aa)) are disordered. Composition is skewed to low complexity over residues 384-395 (HSTASHSSSHTS) and 425-438 (SSMTSHGSSHTSGV). Ser522 carries the post-translational modification Phosphoserine. Phosphothreonine is present on Thr523. Phosphoserine occurs at positions 525, 542, and 544.

The protein resides in the cytoplasm. Its subcellular location is the cell membrane. The sequence is that of FERM domain-containing protein 6 (Frmd6) from Mus musculus (Mouse).